Here is a 161-residue protein sequence, read N- to C-terminus: 3-hydroxyacyl-[acyl-carrier-protein] dehydratase FabZ (161 aa).

His-64 is a catalytic residue.

It belongs to the thioester dehydratase family. FabZ subfamily.

The protein localises to the cytoplasm. The enzyme catalyses a (3R)-hydroxyacyl-[ACP] = a (2E)-enoyl-[ACP] + H2O. Involved in unsaturated fatty acids biosynthesis. Catalyzes the dehydration of short chain beta-hydroxyacyl-ACPs and long chain saturated and unsaturated beta-hydroxyacyl-ACPs. This is 3-hydroxyacyl-[acyl-carrier-protein] dehydratase FabZ from Paramagnetospirillum magneticum (strain ATCC 700264 / AMB-1) (Magnetospirillum magneticum).